The following is a 560-amino-acid chain: Dihydroxy-acid dehydratase (560 aa).

Position 78 (aspartate 78) interacts with Mg(2+). Residue cysteine 119 participates in [2Fe-2S] cluster binding. 2 residues coordinate Mg(2+): aspartate 120 and lysine 121. Lysine 121 is subject to N6-carboxylysine. Position 192 (cysteine 192) interacts with [2Fe-2S] cluster. Glutamate 446 contacts Mg(2+). The Proton acceptor role is filled by serine 472.

This sequence belongs to the IlvD/Edd family. In terms of assembly, homodimer. Requires [2Fe-2S] cluster as cofactor. It depends on Mg(2+) as a cofactor.

It carries out the reaction (2R)-2,3-dihydroxy-3-methylbutanoate = 3-methyl-2-oxobutanoate + H2O. The enzyme catalyses (2R,3R)-2,3-dihydroxy-3-methylpentanoate = (S)-3-methyl-2-oxopentanoate + H2O. It participates in amino-acid biosynthesis; L-isoleucine biosynthesis; L-isoleucine from 2-oxobutanoate: step 3/4. It functions in the pathway amino-acid biosynthesis; L-valine biosynthesis; L-valine from pyruvate: step 3/4. Its function is as follows. Functions in the biosynthesis of branched-chain amino acids. Catalyzes the dehydration of (2R,3R)-2,3-dihydroxy-3-methylpentanoate (2,3-dihydroxy-3-methylvalerate) into 2-oxo-3-methylpentanoate (2-oxo-3-methylvalerate) and of (2R)-2,3-dihydroxy-3-methylbutanoate (2,3-dihydroxyisovalerate) into 2-oxo-3-methylbutanoate (2-oxoisovalerate), the penultimate precursor to L-isoleucine and L-valine, respectively. In Anaeromyxobacter dehalogenans (strain 2CP-C), this protein is Dihydroxy-acid dehydratase.